Consider the following 266-residue polypeptide: Thymidylate synthase (266 aa).

Residue R24 participates in dUMP binding. A (6R)-5,10-methylene-5,6,7,8-tetrahydrofolate-binding site is contributed by H54. R129–R130 is a dUMP binding site. Residue C149 is the Nucleophile of the active site. Residues R169–D172, N180, and H210–Y212 contribute to the dUMP site. D172 is a binding site for (6R)-5,10-methylene-5,6,7,8-tetrahydrofolate. Residue A265 participates in (6R)-5,10-methylene-5,6,7,8-tetrahydrofolate binding.

This sequence belongs to the thymidylate synthase family. Bacterial-type ThyA subfamily. As to quaternary structure, homodimer.

Its subcellular location is the cytoplasm. The catalysed reaction is dUMP + (6R)-5,10-methylene-5,6,7,8-tetrahydrofolate = 7,8-dihydrofolate + dTMP. It functions in the pathway pyrimidine metabolism; dTTP biosynthesis. Its function is as follows. Catalyzes the reductive methylation of 2'-deoxyuridine-5'-monophosphate (dUMP) to 2'-deoxythymidine-5'-monophosphate (dTMP) while utilizing 5,10-methylenetetrahydrofolate (mTHF) as the methyl donor and reductant in the reaction, yielding dihydrofolate (DHF) as a by-product. This enzymatic reaction provides an intracellular de novo source of dTMP, an essential precursor for DNA biosynthesis. This is Thymidylate synthase from Mycobacterium ulcerans (strain Agy99).